We begin with the raw amino-acid sequence, 145 residues long: Basic phospholipase A2 PC10 (145 aa).

Residues 1–21 form the signal peptide; that stretch reads MYPAHLLLLLAVCVSLLGASA. Positions 22 to 27 are excised as a propeptide; the sequence is IPPLPL. Disulfide bonds link Cys-38-Cys-98, Cys-54-Cys-144, Cys-56-Cys-72, Cys-71-Cys-125, Cys-78-Cys-118, Cys-87-Cys-111, and Cys-105-Cys-116. Residues Tyr-55, Gly-57, and Gly-59 each coordinate Ca(2+). The active site involves His-75. Asp-76 serves as a coordination point for Ca(2+). The active site involves Asp-119.

The protein belongs to the phospholipase A2 family. Group I subfamily. D49 sub-subfamily. The cofactor is Ca(2+).

It localises to the secreted. It carries out the reaction a 1,2-diacyl-sn-glycero-3-phosphocholine + H2O = a 1-acyl-sn-glycero-3-phosphocholine + a fatty acid + H(+). Functionally, PLA2 catalyzes the calcium-dependent hydrolysis of the 2-acyl groups in 3-sn-phosphoglycerides. In Laticauda laticaudata (Blue-ringed sea krait), this protein is Basic phospholipase A2 PC10.